A 905-amino-acid chain; its full sequence is Probable cation-transporting ATPase F (905 aa).

Transmembrane regions (helical) follow at residues 84–104, 248–268, and 283–303; these read EFVD…VGFI, FSKF…GVGL, and ALAV…TLAI. Asp333 serves as the catalytic 4-aspartylphosphate intermediate. Residues Asp643 and Asp647 each contribute to the Mg(2+) site. 6 consecutive transmembrane segments (helical) span residues 716-736, 738-758, 778-798, 808-828, 842-862, and 872-892; these read ILAA…ILWI, MTTA…AGIM, TLLV…WELD, TAAL…CRSL, WIIL…YLPA, and IDIG…IVVA.

Belongs to the cation transport ATPase (P-type) (TC 3.A.3) family. Type IIA subfamily.

The protein resides in the cell membrane. It carries out the reaction ATP + H2O = ADP + phosphate + H(+). The chain is Probable cation-transporting ATPase F (ctpF) from Mycobacterium bovis (strain ATCC BAA-935 / AF2122/97).